A 172-amino-acid polypeptide reads, in one-letter code: Adenine phosphoribosyltransferase (172 aa).

Belongs to the purine/pyrimidine phosphoribosyltransferase family. As to quaternary structure, homodimer.

The protein localises to the cytoplasm. It carries out the reaction AMP + diphosphate = 5-phospho-alpha-D-ribose 1-diphosphate + adenine. The protein operates within purine metabolism; AMP biosynthesis via salvage pathway; AMP from adenine: step 1/1. Its function is as follows. Catalyzes a salvage reaction resulting in the formation of AMP, that is energically less costly than de novo synthesis. The protein is Adenine phosphoribosyltransferase of Nostoc punctiforme (strain ATCC 29133 / PCC 73102).